Reading from the N-terminus, the 415-residue chain is Phosphoglycerate transport system transcriptional regulatory protein PgtA (415 aa).

Residues 7 to 121 form the Response regulatory domain; the sequence is SILLIDDDVD…KLLILIEDAL (115 aa). Aspartate 56 carries the post-translational modification 4-aspartylphosphate. Residues 142-341 form the Sigma-54 factor interaction domain; sequence LIGRSEWMNQ…LANAAELFAV (200 aa). Residue 170-177 coordinates ATP; that stretch reads GEHGTGRM. The segment at residues 385–404 is a DNA-binding region (H-T-H motif); sequence INEVAEYLQIPRKKLYLRMK.

Post-translationally, phosphorylated by PgtB.

The protein resides in the cytoplasm. Member of the two-component regulatory system PgtB/PgtA that regulates the inducible phosphoglycerate transport system. When activated by PgtB it acts in conjunction with sigma-54 as a transcriptional activator. In Salmonella typhimurium (strain LT2 / SGSC1412 / ATCC 700720), this protein is Phosphoglycerate transport system transcriptional regulatory protein PgtA (pgtA).